A 298-amino-acid chain; its full sequence is uncharacterized protein (298 aa).

Belongs to the NAD(P)-dependent epimerase/dehydratase family.

This is an uncharacterized protein from Saccharomyces cerevisiae (strain ATCC 204508 / S288c) (Baker's yeast).